The primary structure comprises 638 residues: MVAITLPDGKVRQFDHPVTGLDVAKDIGPGLAKAALAITIDGEMKDLATLIDRDVNLSIITAKSGQDALELLRHDAAHVMAEAVKELYPETQVTIGPSIENGFYYDFARPTPFTPDDLAKIEARMAEIVDRDEAITREEWDRDAAVKFFEDAGEKYKAEIIASIPADQKIGLYRQGNFIDLCRGPHLPSTAKLGKAFKLMKLAGAYWRGDSRNEMLQRIYGTAWFDKKELDAYLHMLEEAEKRDHRRLGREMELFHQQEEAAGSVFWHKKGWTLYRAVESYMRRRLEANNYEEVKTPQLVDFSLWEASGHADKFSESMFTIKTQDERHLAVKPMNCPCHVQIFRQGIKSYRDLPLRMAEFGSCHRYEPSGALHGIMRVRAFTQDDAHIFCTEDQITSETIAFCQLLKEVYTDFGFTDVRVKFSDRPAKRAGSDETWDKAESALLEASKAAGLETVLNPGEGAFYGPKLEFVLRDAIGRDWQCGTLQVDFVLPERLDAAYVAEDGAKKRPVMLHRAILGSFERFLGILIENFAGRFPLWLAPTQVVVATIVSEADDFAREVEATLKAAGLRVELDLRNEKINYKVREHSVAKVPVMLVVGKREAESRQVAIRRLGSQNQEIVALDQAVATLAAEATPPA.

Residues 1–61 form the TGS domain; that stretch reads MVAITLPDGK…DRDVNLSIIT (61 aa). Residues 244 to 536 form a catalytic region; that stretch reads DHRRLGREME…LIENFAGRFP (293 aa). Cys-336, His-387, and His-513 together coordinate Zn(2+).

The protein belongs to the class-II aminoacyl-tRNA synthetase family. As to quaternary structure, homodimer. The cofactor is Zn(2+).

Its subcellular location is the cytoplasm. The enzyme catalyses tRNA(Thr) + L-threonine + ATP = L-threonyl-tRNA(Thr) + AMP + diphosphate + H(+). Its function is as follows. Catalyzes the attachment of threonine to tRNA(Thr) in a two-step reaction: L-threonine is first activated by ATP to form Thr-AMP and then transferred to the acceptor end of tRNA(Thr). Also edits incorrectly charged L-seryl-tRNA(Thr). This chain is Threonine--tRNA ligase, found in Paramagnetospirillum magneticum (strain ATCC 700264 / AMB-1) (Magnetospirillum magneticum).